We begin with the raw amino-acid sequence, 378 residues long: tRNA-specific 2-thiouridylase MnmA (378 aa).

Residues 6–13 (AMSGGVDS) and Leu32 contribute to the ATP site. The active-site Nucleophile is the Cys101. Residues Cys101 and Cys199 are joined by a disulfide bond. An ATP-binding site is contributed by Gly125. The interaction with tRNA stretch occupies residues 148–150 (KDQ). The active-site Cysteine persulfide intermediate is the Cys199.

It belongs to the MnmA/TRMU family.

Its subcellular location is the cytoplasm. The catalysed reaction is S-sulfanyl-L-cysteinyl-[protein] + uridine(34) in tRNA + AH2 + ATP = 2-thiouridine(34) in tRNA + L-cysteinyl-[protein] + A + AMP + diphosphate + H(+). Catalyzes the 2-thiolation of uridine at the wobble position (U34) of tRNA, leading to the formation of s(2)U34. The sequence is that of tRNA-specific 2-thiouridylase MnmA from Micrococcus luteus (strain ATCC 4698 / DSM 20030 / JCM 1464 / CCM 169 / CCUG 5858 / IAM 1056 / NBRC 3333 / NCIMB 9278 / NCTC 2665 / VKM Ac-2230) (Micrococcus lysodeikticus).